A 143-amino-acid polypeptide reads, in one-letter code: Ribonuclease H (143 aa).

The RNase H type-1 domain maps to Met1–Gln136. Positions 9, 47, 69, and 128 each coordinate Mg(2+).

Belongs to the RNase H family. Monomer. The cofactor is Mg(2+).

The protein localises to the cytoplasm. It carries out the reaction Endonucleolytic cleavage to 5'-phosphomonoester.. In terms of biological role, endonuclease that specifically degrades the RNA of RNA-DNA hybrids. The sequence is that of Ribonuclease H from Helicobacter acinonychis (strain Sheeba).